We begin with the raw amino-acid sequence, 324 residues long: Glyoxylate/hydroxypyruvate reductase B (324 aa).

Catalysis depends on residues Arg237 and Glu266. His285 acts as the Proton donor in catalysis.

This sequence belongs to the D-isomer specific 2-hydroxyacid dehydrogenase family. GhrB subfamily. Homodimer.

Its subcellular location is the cytoplasm. The catalysed reaction is glycolate + NADP(+) = glyoxylate + NADPH + H(+). It carries out the reaction (R)-glycerate + NAD(+) = 3-hydroxypyruvate + NADH + H(+). The enzyme catalyses (R)-glycerate + NADP(+) = 3-hydroxypyruvate + NADPH + H(+). In terms of biological role, catalyzes the NADPH-dependent reduction of glyoxylate and hydroxypyruvate into glycolate and glycerate, respectively. The chain is Glyoxylate/hydroxypyruvate reductase B from Salmonella choleraesuis (strain SC-B67).